We begin with the raw amino-acid sequence, 320 residues long: Adhesin MafA 3 (320 aa).

The first 18 residues, 1 to 18, serve as a signal peptide directing secretion; the sequence is MQARLLIPILFSVFILSA. Residue Cys19 is the site of N-palmitoyl cysteine attachment. Cys19 is lipidated: S-diacylglycerol cysteine. A compositionally biased stretch (polar residues) spans 288-298; that stretch reads HTGNSAPSVET. A disordered region spans residues 288 to 320; that stretch reads HTGNSAPSVETDNSHEGYGYSDEVVRQHRQGQP.

It belongs to the MafA family.

The protein resides in the cell outer membrane. In Neisseria meningitidis serogroup C / serotype 2a (strain ATCC 700532 / DSM 15464 / FAM18), this protein is Adhesin MafA 3 (mafA3).